The sequence spans 176 residues: RNA pyrophosphohydrolase (176 aa).

In terms of domain architecture, Nudix hydrolase spans 6–149 (GYRPNVGIVI…KRDVYRRVMK (144 aa)). The short motif at 38–59 (GGINPGESAEQAMYRELFEEVG) is the Nudix box element.

It belongs to the Nudix hydrolase family. RppH subfamily. The cofactor is a divalent metal cation.

Accelerates the degradation of transcripts by removing pyrophosphate from the 5'-end of triphosphorylated RNA, leading to a more labile monophosphorylated state that can stimulate subsequent ribonuclease cleavage. The protein is RNA pyrophosphohydrolase of Shigella dysenteriae serotype 1 (strain Sd197).